Reading from the N-terminus, the 120-residue chain is Large ribosomal subunit protein uL18 (120 aa).

Belongs to the universal ribosomal protein uL18 family. In terms of assembly, part of the 50S ribosomal subunit; part of the 5S rRNA/L5/L18/L25 subcomplex. Contacts the 5S and 23S rRNAs.

This is one of the proteins that bind and probably mediate the attachment of the 5S RNA into the large ribosomal subunit, where it forms part of the central protuberance. The chain is Large ribosomal subunit protein uL18 from Bacillus cereus (strain ATCC 10987 / NRS 248).